The sequence spans 321 residues: Lipoyl synthase (321 aa).

The [4Fe-4S] cluster site is built by C60, C65, C71, C86, C90, C93, and S299. One can recognise a Radical SAM core domain in the interval W72 to L288.

It belongs to the radical SAM superfamily. Lipoyl synthase family. The cofactor is [4Fe-4S] cluster.

The protein resides in the cytoplasm. It catalyses the reaction [[Fe-S] cluster scaffold protein carrying a second [4Fe-4S](2+) cluster] + N(6)-octanoyl-L-lysyl-[protein] + 2 oxidized [2Fe-2S]-[ferredoxin] + 2 S-adenosyl-L-methionine + 4 H(+) = [[Fe-S] cluster scaffold protein] + N(6)-[(R)-dihydrolipoyl]-L-lysyl-[protein] + 4 Fe(3+) + 2 hydrogen sulfide + 2 5'-deoxyadenosine + 2 L-methionine + 2 reduced [2Fe-2S]-[ferredoxin]. The protein operates within protein modification; protein lipoylation via endogenous pathway; protein N(6)-(lipoyl)lysine from octanoyl-[acyl-carrier-protein]: step 2/2. Catalyzes the radical-mediated insertion of two sulfur atoms into the C-6 and C-8 positions of the octanoyl moiety bound to the lipoyl domains of lipoate-dependent enzymes, thereby converting the octanoylated domains into lipoylated derivatives. In Brucella anthropi (strain ATCC 49188 / DSM 6882 / CCUG 24695 / JCM 21032 / LMG 3331 / NBRC 15819 / NCTC 12168 / Alc 37) (Ochrobactrum anthropi), this protein is Lipoyl synthase.